We begin with the raw amino-acid sequence, 293 residues long: Small ribosomal subunit biogenesis GTPase RsgA (293 aa).

The CP-type G domain maps to 63–223 (QNELVRPPIA…VADTPGFSAL (161 aa)). GTP is bound by residues 112-115 (SKID) and 166-174 (GQSGVGKSS). Residues Cys247, Cys252, His254, and Cys260 each contribute to the Zn(2+) site.

It belongs to the TRAFAC class YlqF/YawG GTPase family. RsgA subfamily. As to quaternary structure, monomer. Associates with 30S ribosomal subunit, binds 16S rRNA. It depends on Zn(2+) as a cofactor.

It is found in the cytoplasm. One of several proteins that assist in the late maturation steps of the functional core of the 30S ribosomal subunit. Helps release RbfA from mature subunits. May play a role in the assembly of ribosomal proteins into the subunit. Circularly permuted GTPase that catalyzes slow GTP hydrolysis, GTPase activity is stimulated by the 30S ribosomal subunit. The sequence is that of Small ribosomal subunit biogenesis GTPase RsgA from Geobacillus kaustophilus (strain HTA426).